Reading from the N-terminus, the 406-residue chain is Imidazolonepropionase (406 aa).

Residues histidine 65 and histidine 67 each contribute to the Fe(3+) site. Histidine 65 and histidine 67 together coordinate Zn(2+). Arginine 74, tyrosine 137, and histidine 170 together coordinate 4-imidazolone-5-propanoate. Residue tyrosine 137 coordinates N-formimidoyl-L-glutamate. Histidine 235 provides a ligand contact to Fe(3+). Residue histidine 235 coordinates Zn(2+). Glutamine 238 provides a ligand contact to 4-imidazolone-5-propanoate. Aspartate 310 is a binding site for Fe(3+). Aspartate 310 contacts Zn(2+). N-formimidoyl-L-glutamate-binding residues include asparagine 312 and glycine 314. Threonine 315 lines the 4-imidazolone-5-propanoate pocket.

The protein belongs to the metallo-dependent hydrolases superfamily. HutI family. The cofactor is Zn(2+). Fe(3+) is required as a cofactor.

Its subcellular location is the cytoplasm. It catalyses the reaction 4-imidazolone-5-propanoate + H2O = N-formimidoyl-L-glutamate. It participates in amino-acid degradation; L-histidine degradation into L-glutamate; N-formimidoyl-L-glutamate from L-histidine: step 3/3. Catalyzes the hydrolytic cleavage of the carbon-nitrogen bond in imidazolone-5-propanoate to yield N-formimidoyl-L-glutamate. It is the third step in the universal histidine degradation pathway. This chain is Imidazolonepropionase, found in Vibrio vulnificus (strain YJ016).